Consider the following 336-residue polypeptide: Fructose-1,6-bisphosphatase class 1 (336 aa).

Mg(2+) contacts are provided by Glu90, Asp112, Leu114, and Asp115. Substrate-binding positions include 115-118 (DGSS), Asn211, and Lys277. Glu283 lines the Mg(2+) pocket.

The protein belongs to the FBPase class 1 family. As to quaternary structure, homotetramer. Mg(2+) serves as cofactor.

It is found in the cytoplasm. The enzyme catalyses beta-D-fructose 1,6-bisphosphate + H2O = beta-D-fructose 6-phosphate + phosphate. It participates in carbohydrate biosynthesis; gluconeogenesis. This chain is Fructose-1,6-bisphosphatase class 1, found in Pseudomonas aeruginosa (strain UCBPP-PA14).